A 318-amino-acid polypeptide reads, in one-letter code: Protein RecA (318 aa).

Residue 53–60 (GPESSGKT) participates in ATP binding.

The protein belongs to the RecA family.

The protein localises to the cytoplasm. In terms of biological role, can catalyze the hydrolysis of ATP in the presence of single-stranded DNA, the ATP-dependent uptake of single-stranded DNA by duplex DNA, and the ATP-dependent hybridization of homologous single-stranded DNAs. It interacts with LexA causing its activation and leading to its autocatalytic cleavage. This is Protein RecA from Bacteroides fragilis (strain YCH46).